A 786-amino-acid chain; its full sequence is MLERTLRVLEYNKVKEQLLEHTASSLGRDKVKHLVPSTDFEEIVEMQDTTDEAAKVIRLKGSAPLGGITDIRSNVKRAKIGSMLSPNELLDIANTMYGSRNMKRFIEDMVDNGVELPILETHVAQIVSLYDLEKKITNCIGDGGEVVDSASDKLRGIRTQIRTAESRIREKLENMTRSSNAQKMLSDSIVTIRNERYVIPVKQEYRGVYGGIVHDQSASGQTLFIEPQVIVELNNALQEARVKEKQEIERILLMLTEEVAVEADIVLSNVEVVANLDFIFAKAFYAKRIKATKPIVNNERYMDLRQARHPLIDPEVIVPNNIMLGKDFTTIVITGPNTGGKTVTLKTVGICVLMAQSGLHIPVMDESEICVFKNIFADIGDEQSIEQSLSTFSSHMVNIVDILEKADFESLVLFDELGAGTDPQEGAALAISILDEVCNRGARVVATTHYPELKAYGYNREQVINASVEFDVNTLSPTYKLLIGVPGRSNAFEISKRLGLSDRVIDQARNHISTDTNKIENMIAKLEESQKNAERDWNEAEALRKQSEKLHRELQRQIIEFNEERDERLLKAQKEGEEKVEAAKKEAEGIIQELRQLRKAQLANVKDHELIEAKSRLEGAAPELVKKQKVNVKNTSPKQQLRAGDEVKVLTFGQKGQLLEKVSDTEWSVQIGILKMKVKESNMEYINTPKQTEKKAVATVKGRDYHVSLELDLRGERFENAMARVEKYLDDAQLASYPRVSIIHGKGTGALRQGVQDYLKKHRGVKTFRYGDMGEGGLGVTVVELK.

ATP is bound at residue 335–342 (GPNTGGKT). A Smr domain is found at 711–786 (LDLRGERFEN…GLGVTVVELK (76 aa)).

It belongs to the DNA mismatch repair MutS family. MutS2 subfamily. Homodimer. Binds to stalled ribosomes, contacting rRNA.

Functionally, endonuclease that is involved in the suppression of homologous recombination and thus may have a key role in the control of bacterial genetic diversity. Acts as a ribosome collision sensor, splitting the ribosome into its 2 subunits. Detects stalled/collided 70S ribosomes which it binds and splits by an ATP-hydrolysis driven conformational change. Acts upstream of the ribosome quality control system (RQC), a ribosome-associated complex that mediates the extraction of incompletely synthesized nascent chains from stalled ribosomes and their subsequent degradation. Probably generates substrates for RQC. The protein is Endonuclease MutS2 of Bacillus cereus (strain AH820).